A 93-amino-acid polypeptide reads, in one-letter code: Large ribosomal subunit protein eL43 (93 aa).

The C4-type zinc finger occupies 39–60 (CEFCGKYGVKRKAVGIWGCKDC).

This sequence belongs to the eukaryotic ribosomal protein eL43 family.

This is Large ribosomal subunit protein eL43 (RPL37A) from Brassica rapa subsp. rapa (Turnip).